A 239-amino-acid polypeptide reads, in one-letter code: Uridylate kinase (239 aa).

13 to 16 (KLSG) is an ATP binding site. Gly55 lines the UMP pocket. Residues Gly56 and Arg60 each coordinate ATP. UMP is bound by residues Asp75 and 136–143 (TGNPFFTT). ATP-binding residues include Thr163, Asn164, Tyr169, and Asp172.

This sequence belongs to the UMP kinase family. In terms of assembly, homohexamer.

It is found in the cytoplasm. It catalyses the reaction UMP + ATP = UDP + ADP. The protein operates within pyrimidine metabolism; CTP biosynthesis via de novo pathway; UDP from UMP (UMPK route): step 1/1. With respect to regulation, inhibited by UTP. Catalyzes the reversible phosphorylation of UMP to UDP. This is Uridylate kinase from Neisseria meningitidis serogroup A / serotype 4A (strain DSM 15465 / Z2491).